Here is a 904-residue protein sequence, read N- to C-terminus: MRQGAPARGRRWFVVWALLGLTLGVLVASAAPSSPGTPGVAAATQAANGGPATPAPPAPGAPPTGDPKPKKNRKPKPPKPPRPAGDNATVAAGHATLREHLRDIKAENTDANFYVCPPPTGATVVQFEQPRRCPTRPEGQNYTEGIAVVFKENIAPYKFKATMYYKDVTVSQVWFGHRYSQFMGIFEDRAPVPFEEVIDKINAKGVCRSTAKYVRNNLETTAFHRDDHETDMELKPANAATRTSRGWHTTDLKYNPSRVEAFHRYGTTVNCIVEEVDARSVYPYDEFVLATGDFVYMSPFYGYREGSHTEHTSYAADRFKQVDGFYARDLTTKARATAPTTRNLLTTPKFTVAWDWVPKRPSVCTMTKWQEVDEMLRSEYGGSFRFSSDAISTTFTTNLTEYPLSRVDLGDCIGKDARDAMDRIFARRYNATHIKVGQPQYYLANGGFLIAYQPLLSNTLAELYVREHLREQSRKPPNPTPPPPGASANASVERIKTTSSIEFARLQFTYNHIQRHVNDMLGRVAIAWCELQNHELTLWNEARKLNPNAIASATVGRRVSARMLGDVMAVSTCVPVAADNVIVQNSMRISSRPGACYSRPLVSFRYEDQGPLVEGQLGENNELRLTRDAIEPCTVGHRRYFTFGGGYVYFEEYAYSHQLSRADITTVSTFIDLNITMLEDHEFVPLEVYTRHEIKDSGLLDYTEVQRRNQLHDLRFADIDTVIHADANAAMFAGLGAFFEGMGDLGRAVGKVVMGIVGGVVSAVSGVSSFMSNPFGALAVGLLVLAGLAAAFFAFRYVMRLQSNPMKALYPLTTKELKNPTNPDASGEGEEGGDFDEAKLAEAREMIRYMALVSAMERTEHKAKKKGTSALLSAKVTDMVMRKRRNTNYTQVPNKDGDADEDDL.

Positions 1 to 30 (MRQGAPARGRRWFVVWALLGLTLGVLVASA) are cleaved as a signal peptide. Over residues 31–52 (APSSPGTPGVAAATQAANGGPA) the composition is skewed to low complexity. Residues 31-88 (APSSPGTPGVAAATQAANGGPATPAPPAPGAPPTGDPKPKKNRKPKPPKPPRPAGDNA) are disordered. The Virion surface segment spans residues 31 to 774 (APSSPGTPGV…SGVSSFMSNP (744 aa)). Over residues 53 to 66 (TPAPPAPGAPPTGD) the composition is skewed to pro residues. Residues 70–79 (KKNRKPKPPK) show a composition bias toward basic residues. 2 N-linked (GlcNAc...) asparagine; by host glycosylation sites follow: asparagine 87 and asparagine 141. 5 cysteine pairs are disulfide-bonded: cysteine 116/cysteine 573, cysteine 133/cysteine 529, cysteine 207/cysteine 271, cysteine 364/cysteine 412, and cysteine 596/cysteine 633. 2 involved in fusion and/or binding to host membrane regions span residues 173 to 179 (VWFGHRY) and 258 to 265 (RVEAFHRY). Residues asparagine 398 and asparagine 430 are each glycosylated (N-linked (GlcNAc...) asparagine; by host). A disordered region spans residues 470–492 (REQSRKPPNPTPPPPGASANASV). Over residues 476 to 485 (PPNPTPPPPG) the composition is skewed to pro residues. An N-linked (GlcNAc...) asparagine; by host glycan is attached at asparagine 489. N-linked (GlcNAc...) asparagine; by host glycosylation occurs at asparagine 674. Positions 719 to 772 (IDTVIHADANAAMFAGLGAFFEGMGDLGRAVGKVVMGIVGGVVSAVSGVSSFMS) are hydrophobic membrane proximal region. A helical transmembrane segment spans residues 775-795 (FGALAVGLLVLAGLAAAFFAF). The Intravirion portion of the chain corresponds to 796 to 904 (RYVMRLQSNP…KDGDADEDDL (109 aa)). Residues 849–852 (YMAL) carry the Golgi targeting motif. Positions 883-904 (KRRNTNYTQVPNKDGDADEDDL) are disordered. The Internalization motif motif lies at 889–892 (YTQV).

Belongs to the herpesviridae glycoprotein B family. As to quaternary structure, homotrimer; disulfide-linked. Interacts with host receptor MYH9/NMMHC-IIA. Interacts with host receptor MYH10/NMMHC-IIB. Binds to heparan sulfate proteoglycans. Interacts with gH/gL heterodimer. Interacts with host DEFA1, DEFA2 and DEFA3; these interactions inhibit viral infection. The cytoplasmic tail is phosphorylated by the viral kinase US3. Phosphorylation may be linked to a down-regulation of gB expression on cell surface. In terms of processing, ubiquitinated.

The protein localises to the virion membrane. Its subcellular location is the host cell membrane. It localises to the host endosome membrane. The protein resides in the host Golgi apparatus membrane. In terms of biological role, envelope glycoprotein that forms spikes at the surface of virion envelope and binds to the host cell entry receptors MYH9/NMMHC-IIA and MYH10/NMMHC-IIB, promoting the virus entry into host cells. Essential for the initial attachment to heparan sulfate moieties of the host cell surface proteoglycans. Involved in fusion of viral and cellular membranes leading to virus entry into the host cell: following initial binding to its host cell entry receptors, membrane fusion is mediated by the fusion machinery composed at least of gB and the heterodimer gH/gL. May be involved in the fusion between the virion envelope and the outer nuclear membrane during virion egress. Also plays a role, together with gK, in virus-induced cell-to-cell fusion (syncytia formation). This chain is Envelope glycoprotein B, found in Homo sapiens (Human).